The primary structure comprises 164 residues: Phosphopantetheine adenylyltransferase (164 aa).

T14 contacts substrate. Residues 14–15 (TF) and H22 contribute to the ATP site. Residues K46, M78, and R92 each coordinate substrate. ATP-binding positions include 93 to 95 (GLR), E103, and 128 to 134 (HAFISST).

Belongs to the bacterial CoaD family. As to quaternary structure, homohexamer. Requires Mg(2+) as cofactor.

It localises to the cytoplasm. It catalyses the reaction (R)-4'-phosphopantetheine + ATP + H(+) = 3'-dephospho-CoA + diphosphate. It functions in the pathway cofactor biosynthesis; coenzyme A biosynthesis; CoA from (R)-pantothenate: step 4/5. Its function is as follows. Reversibly transfers an adenylyl group from ATP to 4'-phosphopantetheine, yielding dephospho-CoA (dPCoA) and pyrophosphate. This is Phosphopantetheine adenylyltransferase from Vibrio vulnificus (strain CMCP6).